A 593-amino-acid chain; its full sequence is NADH-quinone oxidoreductase subunit C/D (593 aa).

The interval Met-1–Gln-184 is NADH dehydrogenase I subunit C. The interval Asp-208–Arg-593 is NADH dehydrogenase I subunit D.

This sequence in the N-terminal section; belongs to the complex I 30 kDa subunit family. In the C-terminal section; belongs to the complex I 49 kDa subunit family. In terms of assembly, NDH-1 is composed of 13 different subunits. Subunits NuoB, CD, E, F, and G constitute the peripheral sector of the complex.

Its subcellular location is the cell inner membrane. It catalyses the reaction a quinone + NADH + 5 H(+)(in) = a quinol + NAD(+) + 4 H(+)(out). Functionally, NDH-1 shuttles electrons from NADH, via FMN and iron-sulfur (Fe-S) centers, to quinones in the respiratory chain. The immediate electron acceptor for the enzyme in this species is believed to be ubiquinone. Couples the redox reaction to proton translocation (for every two electrons transferred, four hydrogen ions are translocated across the cytoplasmic membrane), and thus conserves the redox energy in a proton gradient. This Pseudomonas putida (strain ATCC 700007 / DSM 6899 / JCM 31910 / BCRC 17059 / LMG 24140 / F1) protein is NADH-quinone oxidoreductase subunit C/D.